A 313-amino-acid chain; its full sequence is Porphobilinogen deaminase (313 aa).

An S-(dipyrrolylmethanemethyl)cysteine modification is found at Cys242.

The protein belongs to the HMBS family. In terms of assembly, monomer. Requires dipyrromethane as cofactor.

The catalysed reaction is 4 porphobilinogen + H2O = hydroxymethylbilane + 4 NH4(+). It participates in porphyrin-containing compound metabolism; protoporphyrin-IX biosynthesis; coproporphyrinogen-III from 5-aminolevulinate: step 2/4. Functionally, tetrapolymerization of the monopyrrole PBG into the hydroxymethylbilane pre-uroporphyrinogen in several discrete steps. The polypeptide is Porphobilinogen deaminase (Pseudomonas fluorescens (strain Pf0-1)).